The following is a 259-amino-acid chain: Oxaloacetate tautomerase FMP41, mitochondrial (259 aa).

Mg(2+) contacts are provided by E87, E89, and D121.

The protein belongs to the FAH family. The cofactor is Mg(2+). Mn(2+) serves as cofactor.

The protein resides in the mitochondrion. The enzyme catalyses oxaloacetate = enol-oxaloacetate. Its function is as follows. Tautomerase that converts enol-oxaloacetate, a strong inhibitor of succinate dehydrogenase, to the physiological keto form of oxaloacetate. In Saccharomyces cerevisiae (strain ATCC 204508 / S288c) (Baker's yeast), this protein is Oxaloacetate tautomerase FMP41, mitochondrial.